The chain runs to 232 residues: Anti-sigma-K factor RskA (232 aa).

Topologically, residues 1 to 91 are cytoplasmic; that stretch reads MTEPTDFQLL…QSRRQPRWRT (91 aa). Residues 92 to 112 form a helical membrane-spanning segment; it reads AVFASAAAIAVGLGAFGLGVL. Over 113–232 the chain is Extracellular; it reads TRPSASPTVA…GTVLAELPLR (120 aa).

The protein belongs to the anti-sigma-K factor family.

It localises to the cell membrane. Its function is as follows. An anti-sigma factor for extracytoplasmic function (ECF) sigma factor SigK. ECF sigma factors are held in an inactive form by an anti-sigma factor until released by regulated intramembrane proteolysis (RIP). RIP occurs when an extracytoplasmic signal triggers a concerted proteolytic cascade to transmit information and elicit cellular responses. The membrane-spanning regulatory substrate protein is first cut extracytoplasmically (site-1 protease, S1P), then within the membrane itself (site-2 protease, S2P, Rip1), while cytoplasmic proteases finish degrading the regulatory protein, liberating the sigma factor. In Mycobacterium ulcerans (strain Agy99), this protein is Anti-sigma-K factor RskA (rskA).